Here is a 995-residue protein sequence, read N- to C-terminus: tRNA wybutosine-synthesizing protein 2/3/4 (995 aa).

Residues 1-212 (MDFEKRKAAT…GFSVALASNG (212 aa)) form a tRNA wybutosine-synthesizing protein 3 homolog region. Kelch repeat units follow at residues 284-335 (EVIV…MVGD), 336-386 (FMFV…SVGT), 387-436 (KVYI…AYGS), 437-486 (QSFM…VYKH), and 488-535 (IGII…SILG). A tRNA wybutosine-synthesizing protein 2 homolog region spans residues 661–995 (ERSEENNLTK…RHLVADVRCR (335 aa)). S-adenosyl-L-methionine contacts are provided by residues Lys-828 and 896–897 (DN).

It in the C-terminal section; belongs to the class I-like SAM-binding methyltransferase superfamily. TRM5/TYW2 family. This sequence in the N-terminal section; belongs to the TYW3 family.

The enzyme catalyses 4-demethyl-7-[(3S)-3-amino-3-carboxypropyl]wyosine(37) in tRNA(Phe) + S-adenosyl-L-methionine = 7-[(3S)-3-amino-3-carboxypropyl]wyosine(37) in tRNA(Phe) + S-adenosyl-L-homocysteine + H(+). The catalysed reaction is 4-demethylwyosine(37) in tRNA(Phe) + S-adenosyl-L-methionine = 4-demethyl-7-[(3S)-3-amino-3-carboxypropyl]wyosine(37) in tRNA(Phe) + S-methyl-5'-thioadenosine + H(+). It functions in the pathway tRNA modification; wybutosine-tRNA(Phe) biosynthesis. Its function is as follows. S-adenosyl-L-methionine-dependent transferase that acts as a component of the wybutosine biosynthesis pathway. Wybutosine is a hyper modified guanosine with a tricyclic base found at the 3'-position adjacent to the anticodon of eukaryotic phenylalanine tRNA. The sequence is that of tRNA wybutosine-synthesizing protein 2/3/4 from Arabidopsis thaliana (Mouse-ear cress).